The chain runs to 218 residues: LexA repressor (218 aa).

Positions 28-48 form a DNA-binding region, H-T-H motif; sequence RAEIAAEFGFSSPNAAEEHLR. Catalysis depends on for autocatalytic cleavage activity residues S136 and K173.

This sequence belongs to the peptidase S24 family. In terms of assembly, homodimer.

The enzyme catalyses Hydrolysis of Ala-|-Gly bond in repressor LexA.. Functionally, represses a number of genes involved in the response to DNA damage (SOS response), including recA and lexA. In the presence of single-stranded DNA, RecA interacts with LexA causing an autocatalytic cleavage which disrupts the DNA-binding part of LexA, leading to derepression of the SOS regulon and eventually DNA repair. The sequence is that of LexA repressor from Cupriavidus pinatubonensis (strain JMP 134 / LMG 1197) (Cupriavidus necator (strain JMP 134)).